The sequence spans 229 residues: 5'-methylthioadenosine/S-adenosylhomocysteine nucleosidase (229 aa).

Residue E12 is the Proton acceptor of the active site. Substrate is bound by residues G78, I152, and 173–174 (ME). D197 serves as the catalytic Proton donor.

This sequence belongs to the PNP/UDP phosphorylase family. MtnN subfamily.

It catalyses the reaction S-adenosyl-L-homocysteine + H2O = S-(5-deoxy-D-ribos-5-yl)-L-homocysteine + adenine. It carries out the reaction S-methyl-5'-thioadenosine + H2O = 5-(methylsulfanyl)-D-ribose + adenine. The enzyme catalyses 5'-deoxyadenosine + H2O = 5-deoxy-D-ribose + adenine. Its pathway is amino-acid biosynthesis; L-methionine biosynthesis via salvage pathway; S-methyl-5-thio-alpha-D-ribose 1-phosphate from S-methyl-5'-thioadenosine (hydrolase route): step 1/2. In terms of biological role, catalyzes the irreversible cleavage of the glycosidic bond in both 5'-methylthioadenosine (MTA) and S-adenosylhomocysteine (SAH/AdoHcy) to adenine and the corresponding thioribose, 5'-methylthioribose and S-ribosylhomocysteine, respectively. Also cleaves 5'-deoxyadenosine, a toxic by-product of radical S-adenosylmethionine (SAM) enzymes, into 5-deoxyribose and adenine. In Mannheimia succiniciproducens (strain KCTC 0769BP / MBEL55E), this protein is 5'-methylthioadenosine/S-adenosylhomocysteine nucleosidase.